A 299-amino-acid polypeptide reads, in one-letter code: Taste receptor type 2 member 1 (299 aa).

Over 1-9 (MLESHLIIY) the chain is Extracellular. The helical transmembrane segment at 10–30 (FLLAVIQFLLGIFTNGIIVVV) threads the bilayer. Residues 31–55 (NGIDLIKHRKMAPLDLLLSCLAVSR) are Cytoplasmic-facing. A helical membrane pass occupies residues 56 to 76 (IFLQLFIFYVNVIVIFFIEFI). Topologically, residues 77 to 81 (MCSAN) are extracellular. A helical transmembrane segment spans residues 82–102 (CAILLFVNELELWLATWLGVF). The Cytoplasmic segment spans residues 103–124 (YCAKVASVRHPLFIWLKMRISK). The chain crosses the membrane as a helical span at residues 125–145 (LVPWMILGSLLYVSMICVFHS). The Extracellular portion of the chain corresponds to 146 to 178 (KYAGFMVPHFLRNFFSQNATIQKEDTLAIQIFS). Residue N163 is glycosylated (N-linked (GlcNAc...) asparagine). The chain crosses the membrane as a helical span at residues 179–199 (FVAEFSVPLLIFLVAVLLLIF). Over 200 to 222 (SLGRHTRQMRNTVAGSRVPGRGA) the chain is Cytoplasmic. Residues 223–243 (PISALLSILSFLILYFSHCMI) form a helical membrane-spanning segment. At 244-257 (KVFLSSLKFHVRRF) the chain is on the extracellular side. Residues 258–278 (IFLFFILVIGIYPSGHSLILI) form a helical membrane-spanning segment. Over 279–299 (LGNPKLKQNAKKFLLHSKCCQ) the chain is Cytoplasmic.

The protein belongs to the G-protein coupled receptor T2R family.

Its subcellular location is the membrane. Its function is as follows. Receptor that may play a role in the perception of bitterness and is gustducin-linked. May play a role in sensing the chemical composition of the gastrointestinal content. The activity of this receptor may stimulate alpha gustducin, mediate PLC-beta-2 activation and lead to the gating of TRPM5. The polypeptide is Taste receptor type 2 member 1 (TAS2R1) (Pan paniscus (Pygmy chimpanzee)).